The chain runs to 265 residues: Oxygen-evolving enhancer protein 2-2, chloroplastic (265 aa).

A chloroplast-targeting transit peptide spans 1-79 (MASTQCFLHH…VGSKVSPADA (79 aa)).

It belongs to the PsbP family.

Its subcellular location is the plastid. The protein localises to the chloroplast thylakoid membrane. In terms of biological role, may be involved in the regulation of photosystem II. The chain is Oxygen-evolving enhancer protein 2-2, chloroplastic (PSBP2) from Nicotiana tabacum (Common tobacco).